The following is a 209-amino-acid chain: Orotate phosphoribosyltransferase (209 aa).

Residues Arg96, Lys100, His102, and 122–130 (EDLISTGKS) each bind 5-phospho-alpha-D-ribose 1-diphosphate. Ser126 contributes to the orotate binding site.

The protein belongs to the purine/pyrimidine phosphoribosyltransferase family. PyrE subfamily. As to quaternary structure, homodimer. It depends on Mg(2+) as a cofactor.

The catalysed reaction is orotidine 5'-phosphate + diphosphate = orotate + 5-phospho-alpha-D-ribose 1-diphosphate. It functions in the pathway pyrimidine metabolism; UMP biosynthesis via de novo pathway; UMP from orotate: step 1/2. Catalyzes the transfer of a ribosyl phosphate group from 5-phosphoribose 1-diphosphate to orotate, leading to the formation of orotidine monophosphate (OMP). The polypeptide is Orotate phosphoribosyltransferase (Coxiella burnetii (strain RSA 493 / Nine Mile phase I)).